A 304-amino-acid polypeptide reads, in one-letter code: Lipid droplet-associated triacylglycerol lipase (304 aa).

The Lumenal segment spans residues Met1–Arg155. The N-linked (GlcNAc...) asparagine glycan is linked to Asn95. Residues Gly107–Gly111 carry the GXSXG motif. Ser109 functions as the Nucleophile in the catalytic mechanism. Residues Tyr156 to Leu176 lie within the membrane without spanning it. At Ser177–Phe304 the chain is on the lumenal side.

The protein belongs to the AB hydrolase superfamily. LDAH family.

Its subcellular location is the lipid droplet. It localises to the membrane. It carries out the reaction a triacylglycerol + H2O = a diacylglycerol + a fatty acid + H(+). Functionally, shows both triacylglycerol (TAG) lipase and ester hydrolase activities. May play a role in TAG homeostasis. This chain is Lipid droplet-associated triacylglycerol lipase, found in Saccharomyces cerevisiae (strain ATCC 204508 / S288c) (Baker's yeast).